A 656-amino-acid polypeptide reads, in one-letter code: DNA mismatch repair protein MutL (656 aa).

It belongs to the DNA mismatch repair MutL/HexB family.

In terms of biological role, this protein is involved in the repair of mismatches in DNA. It is required for dam-dependent methyl-directed DNA mismatch repair. May act as a 'molecular matchmaker', a protein that promotes the formation of a stable complex between two or more DNA-binding proteins in an ATP-dependent manner without itself being part of a final effector complex. The polypeptide is DNA mismatch repair protein MutL (Lactococcus lactis subsp. lactis (strain IL1403) (Streptococcus lactis)).